The following is a 402-amino-acid chain: Putative F-box protein At3g20030 (402 aa).

One can recognise an F-box domain in the interval 1 to 56 (MTMMSDLSQDLLEEILSRVPRTSLGAVRSTCKRWNTLFKDRILCKAEETRDQFRFI).

The protein is Putative F-box protein At3g20030 of Arabidopsis thaliana (Mouse-ear cress).